Consider the following 114-residue polypeptide: Ribonuclease U2 (114 aa).

Cystine bridges form between Cys-1/Cys-54, Cys-9/Cys-113, and Cys-55/Cys-96. Residues Asp-29, Val-30, Ala-31, Asn-32, Asp-37, and Tyr-39 each contribute to the Ca(2+) site. A substrate-binding site is contributed by 39 to 49 (YPHQYYDEASE). His-41 is an active-site residue. Glu-62 acts as the Proton acceptor in catalysis. A substrate-binding site is contributed by Arg-85. His-101 (proton donor) is an active-site residue. Position 108 to 110 (108 to 110 (DGF)) interacts with substrate.

Belongs to the ribonuclease U2 family.

It catalyses the reaction [RNA] containing adenosine + H2O = an [RNA fragment]-3'-adenosine-3'-phosphate + a 5'-hydroxy-ribonucleotide-3'-[RNA fragment].. The enzyme catalyses [RNA] containing guanosine + H2O = an [RNA fragment]-3'-guanosine-3'-phosphate + a 5'-hydroxy-ribonucleotide-3'-[RNA fragment].. The sequence is that of Ribonuclease U2 (RNU2) from Ustilago sphaerogena (Smut fungus).